Here is a 621-residue protein sequence, read N- to C-terminus: MPPFELGDPIPSETAHAVSVSLPTWSANVGYEEGQDWVVKRMATGYPRFFIHRTIQAFAADIVATHVSTKAKRTSDITAMLFPTPTIASRCVDFIRSRAPADVCSNIEVVNLVLDMSDPEARALEPLCPSISAVIMPQDGFPFAKQYWQHSGDGVSSRRAEFCHGLFKDGLLRPDTELRNAAVSAAKPCRGPKRYQRQASLDAGGNQQTIMHGHIHRATGETAMIQETSRFLEERFGRNLDLSFVHPAKSAIKRRIAGALRSADHDLGGSPSLSEKQMSSNTRGIANLREEDIYLFPCGMNAIFHAHRALYSIRTPPGSTPLKSVNFGFPYVDTLKILEKFNPSGALFYGHGSKSDLDDLETRLESGERYLALFCEFPGNPLLTCPDLVRIRELADKYEFAVVVDETIGTFANVNVLQFADIVVSSLTKIFSGDCNVMGGGAIFNPNSRYYSALKSFVQQQLEDTYWPEDVIFMERNSRDFVARIDRVNANAEAICRVLQDHPLVKTLYYPKYNDSRANYEAVKLPQGGYGGLISVVLKGKKQAVAFYDAIETAKGPSLGTNFTLTSPYVLLAHYQELDWAEQYGVDRNLIRISVGLEGTDELINVFTRALKVAEEQSQYP.

N6-(pyridoxal phosphate)lysine is present on lysine 429.

This sequence belongs to the trans-sulfuration enzymes family. MET7 subfamily. As to quaternary structure, both met-3 and met-7 are required to form a functional cystathionine gamma-synthase. Pyridoxal 5'-phosphate is required as a cofactor.

It carries out the reaction O-succinyl-L-homoserine + L-cysteine = L,L-cystathionine + succinate + H(+). It functions in the pathway amino-acid biosynthesis; L-methionine biosynthesis via de novo pathway; L-cystathionine from O-succinyl-L-homoserine: step 1/1. Functionally, catalyzes the formation of L-cystathionine from O-succinyl-L-homoserine (OSHS) and L-cysteine, via a gamma-replacement reaction. In the absence of thiol, catalyzes gamma-elimination to form 2-oxobutanoate, succinate and ammonia. This is Cystathionine gamma-synthase (met-7) from Neurospora crassa (strain ATCC 24698 / 74-OR23-1A / CBS 708.71 / DSM 1257 / FGSC 987).